The chain runs to 159 residues: MNRVIYPGTFDPITKGHGDLVERAAKLFDHVIIAVAASPKKNPLFSLDKRVELAREVTRHLPNVEVLGFSSLLAQFAREQKANALLRGLRAVSDFEYEFQLANMNRQLAPEVESLFLTPSEKYSYISSTLVREIAALGGNIEQFVHPAVADALRERFRA.

T9 contributes to the substrate binding site. ATP is bound by residues 9 to 10 (TF) and H17. Substrate is bound by residues K41, L73, and R87. Residues 88–90 (GLR), E98, and 123–129 (YSYISST) contribute to the ATP site.

It belongs to the bacterial CoaD family. As to quaternary structure, homohexamer. Mg(2+) serves as cofactor.

The protein localises to the cytoplasm. The catalysed reaction is (R)-4'-phosphopantetheine + ATP + H(+) = 3'-dephospho-CoA + diphosphate. It participates in cofactor biosynthesis; coenzyme A biosynthesis; CoA from (R)-pantothenate: step 4/5. Functionally, reversibly transfers an adenylyl group from ATP to 4'-phosphopantetheine, yielding dephospho-CoA (dPCoA) and pyrophosphate. This chain is Phosphopantetheine adenylyltransferase, found in Azotobacter vinelandii (strain DJ / ATCC BAA-1303).